The chain runs to 319 residues: MATH domain and coiled-coil domain-containing protein At3g58200 (319 aa).

The region spanning 6 to 132 (DNKFRWVIKN…NEEVKIVVEV (127 aa)) is the MATH domain. A coiled-coil region spans residues 255-302 (FKVDWLEKKLEEVKEKKKEEQIGETRMQEMKVFKQKCSDIEALMEREK).

This Arabidopsis thaliana (Mouse-ear cress) protein is MATH domain and coiled-coil domain-containing protein At3g58200.